A 299-amino-acid polypeptide reads, in one-letter code: uncharacterized protein (299 aa).

Belongs to the glycosyltransferase 2 family.

This is an uncharacterized protein from Mycoplasma pneumoniae (strain ATCC 29342 / M129 / Subtype 1) (Mycoplasmoides pneumoniae).